Reading from the N-terminus, the 230-residue chain is Type II restriction enzyme MjaV (230 aa).

The catalysed reaction is Endonucleolytic cleavage of DNA to give specific double-stranded fragments with terminal 5'-phosphates.. A P subtype restriction enzyme that recognizes the double-stranded sequence 5'-GTAC-3'; the cleavage site is unknown. This Methanocaldococcus jannaschii (strain ATCC 43067 / DSM 2661 / JAL-1 / JCM 10045 / NBRC 100440) (Methanococcus jannaschii) protein is Type II restriction enzyme MjaV (mjaVR).